A 975-amino-acid chain; its full sequence is FHF complex subunit HOOK-interacting protein 1B (975 aa).

Residues 465–496 (APSPPRPEHASWARGPGSPSVDSSSVVTVPRP) are disordered. Position 467 is a phosphoserine (S467). A compositionally biased stretch (low complexity) spans 482-496 (SPSVDSSSVVTVPRP). S510, S523, S529, and S533 each carry phosphoserine. Disordered stretches follow at residues 511–548 (LGGS…GELE), 573–621 (SAPY…GLAV), and 690–717 (SNGG…SFTC). Over residues 527-538 (TASPTSSPSRRP) the composition is skewed to low complexity. Positions 597 to 608 (LLPEEDRDNVRE) are enriched in basic and acidic residues. S863 carries the post-translational modification Phosphoserine. A Phosphothreonine modification is found at T892. Residue S900 is modified to Phosphoserine.

The protein belongs to the FHIP family. In terms of assembly, component of the FTS/Hook/FHIP complex (FHF complex), composed of AKTIP/FTS, FHIP1B, and one or more members of the Hook family of proteins HOOK1, HOOK2, and HOOK3. The FHF complex associates with the homotypic vesicular sorting complex (the HOPS complex).

In terms of biological role, component of the FTS/Hook/FHIP complex (FHF complex). The FHF complex may function to promote vesicle trafficking and/or fusion via the homotypic vesicular protein sorting complex (the HOPS complex). FHF complex promotes the distribution of AP-4 complex to the perinuclear area of the cell. This is FHF complex subunit HOOK-interacting protein 1B from Mus musculus (Mouse).